A 266-amino-acid chain; its full sequence is MRKKITIPEILLMKQEGRKVTVLTAYDYPTARLVDAGGVDAILVGDSAGVVFSGHENTLPVTMDEMLYHVKAVVRARPKALVVADMPFMACQSGEIEALKNCGRMLQEGGAEAVKIEGGSNMAPIIRAVTEMDIPVMGHVGLTPQSVHRMGGYKVQGRKDQAERILEDAHAVQEAGAFAVVLEGIPAKLAARITEMLEIPTIGIGAGPACDGQVLVIHDILGLCEKYSPKFVKRYADLAPLITEAARQYVSEVKDGTFPTEEHSFS.

2 residues coordinate Mg(2+): D46 and D85. 3-methyl-2-oxobutanoate contacts are provided by residues 46-47 (DS), D85, and K115. Residue E117 coordinates Mg(2+). The active-site Proton acceptor is the E183.

Belongs to the PanB family. Homodecamer; pentamer of dimers. Mg(2+) is required as a cofactor.

The protein resides in the cytoplasm. The catalysed reaction is 3-methyl-2-oxobutanoate + (6R)-5,10-methylene-5,6,7,8-tetrahydrofolate + H2O = 2-dehydropantoate + (6S)-5,6,7,8-tetrahydrofolate. It participates in cofactor biosynthesis; (R)-pantothenate biosynthesis; (R)-pantoate from 3-methyl-2-oxobutanoate: step 1/2. In terms of biological role, catalyzes the reversible reaction in which hydroxymethyl group from 5,10-methylenetetrahydrofolate is transferred onto alpha-ketoisovalerate to form ketopantoate. The sequence is that of 3-methyl-2-oxobutanoate hydroxymethyltransferase from Trichlorobacter lovleyi (strain ATCC BAA-1151 / DSM 17278 / SZ) (Geobacter lovleyi).